We begin with the raw amino-acid sequence, 546 residues long: Glucose-6-phosphate isomerase (546 aa).

The Proton donor role is filled by glutamate 356. Residues histidine 387 and lysine 507 contribute to the active site.

The protein belongs to the GPI family.

It is found in the cytoplasm. The enzyme catalyses alpha-D-glucose 6-phosphate = beta-D-fructose 6-phosphate. The protein operates within carbohydrate biosynthesis; gluconeogenesis. It participates in carbohydrate degradation; glycolysis; D-glyceraldehyde 3-phosphate and glycerone phosphate from D-glucose: step 2/4. Its function is as follows. Catalyzes the reversible isomerization of glucose-6-phosphate to fructose-6-phosphate. The sequence is that of Glucose-6-phosphate isomerase from Syntrophus aciditrophicus (strain SB).